We begin with the raw amino-acid sequence, 146 residues long: Large ribosomal subunit protein bL17 (146 aa).

The tract at residues 118 to 146 (RDPAAKGQDSGPKPEVASDEDEAGEAAAA) is disordered. A compositionally biased stretch (acidic residues) spans 134–146 (ASDEDEAGEAAAA).

The protein belongs to the bacterial ribosomal protein bL17 family. Part of the 50S ribosomal subunit. Contacts protein L32.

This is Large ribosomal subunit protein bL17 from Acidiphilium cryptum (strain JF-5).